Here is a 126-residue protein sequence, read N- to C-terminus: Fluoride-specific ion channel FluC (126 aa).

4 helical membrane-spanning segments follow: residues 1 to 21 (MTAT…RFHA), 33 to 53 (AVFP…MGVL), 72 to 92 (VGVL…ALLV), and 97 to 117 (IGLA…GLFL). Residues glycine 76 and threonine 79 each coordinate Na(+).

This sequence belongs to the fluoride channel Fluc/FEX (TC 1.A.43) family.

It localises to the cell inner membrane. It catalyses the reaction fluoride(in) = fluoride(out). Na(+) is not transported, but it plays an essential structural role and its presence is essential for fluoride channel function. Its function is as follows. Fluoride-specific ion channel. Important for reducing fluoride concentration in the cell, thus reducing its toxicity. This Novosphingobium aromaticivorans (strain ATCC 700278 / DSM 12444 / CCUG 56034 / CIP 105152 / NBRC 16084 / F199) protein is Fluoride-specific ion channel FluC.